A 315-amino-acid chain; its full sequence is Tyrosine recombinase XerC (315 aa).

The Core-binding (CB) domain maps to 1-103 (MIASFYAFLD…AIKSFAKFCV (103 aa)). One can recognise a Tyr recombinase domain in the interval 124-306 (ELPSPLTYEQ…SMKLKKQIHD (183 aa)). Catalysis depends on residues Arg-164, Lys-188, His-258, Arg-261, and His-284. The active-site O-(3'-phospho-DNA)-tyrosine intermediate is Tyr-293.

This sequence belongs to the 'phage' integrase family. XerC subfamily. In terms of assembly, forms a cyclic heterotetrameric complex composed of two molecules of XerC and two molecules of XerD.

The protein resides in the cytoplasm. Its function is as follows. Site-specific tyrosine recombinase, which acts by catalyzing the cutting and rejoining of the recombining DNA molecules. The XerC-XerD complex is essential to convert dimers of the bacterial chromosome into monomers to permit their segregation at cell division. It also contributes to the segregational stability of plasmids. This chain is Tyrosine recombinase XerC, found in Chlamydia muridarum (strain MoPn / Nigg).